The chain runs to 397 residues: Bifunctional arginine demethylase and lysyl-hydroxylase psr-1 (397 aa).

The 165-residue stretch at 146–310 (RKTKKLSEDY…LVWPKTVRGR (165 aa)) folds into the JmjC domain. Threonine 189 provides a ligand contact to substrate. Positions 192 and 194 each coordinate Fe cation. Residue asparagine 202 participates in 2-oxoglutarate binding. Lysine 209 provides a ligand contact to substrate. Histidine 278 lines the Fe cation pocket. A 2-oxoglutarate-binding site is contributed by threonine 290. The segment covering 334–344 (SCTDTPPQSLN) has biased composition (polar residues). A disordered region spans residues 334–383 (SCTDTPPQSLNDSSSDSSSSSSSSDDSSDSETEEDSGRCGLGNRKRRNDV). Low complexity predominate over residues 345 to 358 (DSSSDSSSSSSSSD).

This sequence belongs to the JMJD6 family. In terms of assembly, interacts with ced-5 and ced-12. Fe(2+) serves as cofactor.

The protein resides in the nucleus. In terms of biological role, dioxygenase that can both act as a histone arginine demethylase and a lysyl-hydroxylase. The polypeptide is Bifunctional arginine demethylase and lysyl-hydroxylase psr-1 (psr-1) (Caenorhabditis briggsae).